The primary structure comprises 374 residues: Chaperone protein DnaJ (374 aa).

The 66-residue stretch at 5–70 (DYYEVLGVER…SKRAAFDQYG (66 aa)) folds into the J domain. The CR-type zinc-finger motif lies at 133–211 (GTTVSIRVPT…CHGEGRVEEY (79 aa)). Zn(2+) is bound by residues C146, C149, C163, C166, C185, C188, C199, and C202. CXXCXGXG motif repeat units lie at residues 146 to 153 (CQPCDGSG), 163 to 170 (CPTCGGIG), 185 to 192 (CPRCHGQG), and 199 to 206 (CTSCHGEG).

This sequence belongs to the DnaJ family. As to quaternary structure, homodimer. Requires Zn(2+) as cofactor.

It localises to the cytoplasm. Functionally, participates actively in the response to hyperosmotic and heat shock by preventing the aggregation of stress-denatured proteins and by disaggregating proteins, also in an autonomous, DnaK-independent fashion. Unfolded proteins bind initially to DnaJ; upon interaction with the DnaJ-bound protein, DnaK hydrolyzes its bound ATP, resulting in the formation of a stable complex. GrpE releases ADP from DnaK; ATP binding to DnaK triggers the release of the substrate protein, thus completing the reaction cycle. Several rounds of ATP-dependent interactions between DnaJ, DnaK and GrpE are required for fully efficient folding. Also involved, together with DnaK and GrpE, in the DNA replication of plasmids through activation of initiation proteins. In Pseudomonas putida (strain GB-1), this protein is Chaperone protein DnaJ.